A 341-amino-acid chain; its full sequence is S-adenosylmethionine:tRNA ribosyltransferase-isomerase (341 aa).

Belongs to the QueA family. As to quaternary structure, monomer.

Its subcellular location is the cytoplasm. It carries out the reaction 7-aminomethyl-7-carbaguanosine(34) in tRNA + S-adenosyl-L-methionine = epoxyqueuosine(34) in tRNA + adenine + L-methionine + 2 H(+). It functions in the pathway tRNA modification; tRNA-queuosine biosynthesis. Its function is as follows. Transfers and isomerizes the ribose moiety from AdoMet to the 7-aminomethyl group of 7-deazaguanine (preQ1-tRNA) to give epoxyqueuosine (oQ-tRNA). This Desulfitobacterium hafniense (strain DSM 10664 / DCB-2) protein is S-adenosylmethionine:tRNA ribosyltransferase-isomerase.